Consider the following 436-residue polypeptide: Aminopeptidase C (436 aa).

Catalysis depends on residues cysteine 68, histidine 356, and asparagine 378.

The protein belongs to the peptidase C1 family. In terms of assembly, homohexamer.

It catalyses the reaction Inactivates bleomycin B2 (a cytotoxic glycometallopeptide) by hydrolysis of a carboxyamide bond of beta-aminoalanine, but also shows general aminopeptidase activity. The specificity varies somewhat with source, but amino acid arylamides of Met, Leu and Ala are preferred.. Functionally, hydrolyzes naphthylamide-substituted amino acids as well as di- and tripeptides in which the half-cystine residue is involved in a disulfide loop, notably in oxytocin and vasopressin. Also has a bleomycin hydrolase activity. The chain is Aminopeptidase C (pepC) from Lactococcus lactis subsp. lactis (strain IL1403) (Streptococcus lactis).